The primary structure comprises 291 residues: Lipase (291 aa).

The first 17 residues, 1-17, serve as a signal peptide directing secretion; that stretch reads MRSSLVLFFVSAWTALA. Positions 18–22 are excised as a propeptide; that stretch reads SPIRR. 3 cysteine pairs are disulfide-bonded: Cys-44/Cys-290, Cys-58/Cys-63, and Cys-126/Cys-129. The Nucleophile role is filled by Ser-168. Active-site charge relay system residues include Asp-223 and His-280.

Belongs to the AB hydrolase superfamily. Lipase family.

The enzyme catalyses a triacylglycerol + H2O = a diacylglycerol + a fatty acid + H(+). The polypeptide is Lipase (LIP) (Thermomyces lanuginosus (Humicola lanuginosa)).